Consider the following 94-residue polypeptide: Pyrimidine/purine nucleoside phosphorylase (94 aa).

This sequence belongs to the nucleoside phosphorylase PpnP family.

The catalysed reaction is a purine D-ribonucleoside + phosphate = a purine nucleobase + alpha-D-ribose 1-phosphate. It carries out the reaction adenosine + phosphate = alpha-D-ribose 1-phosphate + adenine. The enzyme catalyses cytidine + phosphate = cytosine + alpha-D-ribose 1-phosphate. It catalyses the reaction guanosine + phosphate = alpha-D-ribose 1-phosphate + guanine. The catalysed reaction is inosine + phosphate = alpha-D-ribose 1-phosphate + hypoxanthine. It carries out the reaction thymidine + phosphate = 2-deoxy-alpha-D-ribose 1-phosphate + thymine. The enzyme catalyses uridine + phosphate = alpha-D-ribose 1-phosphate + uracil. It catalyses the reaction xanthosine + phosphate = alpha-D-ribose 1-phosphate + xanthine. Functionally, catalyzes the phosphorolysis of diverse nucleosides, yielding D-ribose 1-phosphate and the respective free bases. Can use uridine, adenosine, guanosine, cytidine, thymidine, inosine and xanthosine as substrates. Also catalyzes the reverse reactions. The polypeptide is Pyrimidine/purine nucleoside phosphorylase (Pseudomonas fluorescens (strain ATCC BAA-477 / NRRL B-23932 / Pf-5)).